The following is a 155-amino-acid chain: MRKNRALKRTVLPDPVFNNTLVTRIINVIMKDGKKGLAQRILYGAFEIIEKRTNQQPLTVFEKAVDNVMPRLELKVRRIAGSNYQVPTEVPPDRRIALALRWIVIFANKRNEKTMLERVANEIIDAFNNTGASVKKKDDTHKMAEANKAFAHMRW.

This sequence belongs to the universal ribosomal protein uS7 family. In terms of assembly, part of the 30S ribosomal subunit. Contacts proteins S9 and S11.

Its function is as follows. One of the primary rRNA binding proteins, it binds directly to 16S rRNA where it nucleates assembly of the head domain of the 30S subunit. Is located at the subunit interface close to the decoding center, probably blocks exit of the E-site tRNA. In Mycoplasma genitalium (strain ATCC 33530 / DSM 19775 / NCTC 10195 / G37) (Mycoplasmoides genitalium), this protein is Small ribosomal subunit protein uS7.